A 315-amino-acid chain; its full sequence is Shiga toxin subunit A (315 aa).

Residues 1-22 form the signal peptide; the sequence is MKIIIFRVLTFFFVIFSVNVVA. Residues 23-273 are A1; sequence KEFTLDFSTA…CHHHASRVAR (251 aa). Glu189 is a catalytic residue. A disulfide bridge links Cys264 with Cys283. Residues 274-315 form an A2 region; it reads MASDEFPSMCPADGRVRGITHNKILWDSSTLGAILMRRTISS.

Belongs to the ribosome-inactivating protein family. In terms of assembly, shiga toxin contains a single subunit A and five copies of subunit B.

It catalyses the reaction Endohydrolysis of the N-glycosidic bond at one specific adenosine on the 28S rRNA.. Functionally, the A subunit is responsible for inhibiting protein synthesis through the catalytic inactivation of 60S ribosomal subunits. After endocytosis, the A subunit is cleaved by furin in two fragments, A1 and A2: A1 is the catalytically active fragment, and A2 is essential for holotoxin assembly with the B subunits. This is Shiga toxin subunit A (stxA) from Shigella sonnei (Shigella sonnei bacteriophage 7888).